The following is a 359-amino-acid chain: Peptide chain release factor 1 (359 aa).

The residue at position 234 (Gln234) is an N5-methylglutamine. The interval 283-305 (SQKDAARAADRRAQVGSGDRSER) is disordered.

Belongs to the prokaryotic/mitochondrial release factor family. Methylated by PrmC. Methylation increases the termination efficiency of RF1.

The protein localises to the cytoplasm. Its function is as follows. Peptide chain release factor 1 directs the termination of translation in response to the peptide chain termination codons UAG and UAA. This is Peptide chain release factor 1 from Methylobacterium sp. (strain 4-46).